The chain runs to 150 residues: uncharacterized protein (150 aa).

The protein belongs to the OsmC/Ohr family.

This is an uncharacterized protein from Bacillus subtilis (strain 168).